We begin with the raw amino-acid sequence, 352 residues long: Phospho-N-acetylmuramoyl-pentapeptide-transferase (352 aa).

The next 10 helical transmembrane spans lie at 16 to 36 (YITFRAGAAFFIAFFLALLFM), 66 to 86 (TPTMGGLVFIGATLLASLLCA), 88 to 108 (LNNLYVLAGLAVILLFGLIGL), 129 to 149 (MLYLVLAGASVSAALFYFGME), 160 to 180 (PLLSMGIVAILFWTLVMVATS), 191 to 211 (GLATVPSVYALVSLSVFVYIA), 228 to 248 (SGEAVIVSAALVGALIGFLWF), 255 to 275 (LFMGDSGSLSIGGFIAYMAII), 280 to 300 (FLLFLIGSIFVIETVSVILQI), and 329 to 349 (KIIVRFWIIALMSNIIALLTL).

The protein belongs to the glycosyltransferase 4 family. MraY subfamily. It depends on Mg(2+) as a cofactor.

It localises to the cell inner membrane. The catalysed reaction is UDP-N-acetyl-alpha-D-muramoyl-L-alanyl-gamma-D-glutamyl-meso-2,6-diaminopimeloyl-D-alanyl-D-alanine + di-trans,octa-cis-undecaprenyl phosphate = di-trans,octa-cis-undecaprenyl diphospho-N-acetyl-alpha-D-muramoyl-L-alanyl-D-glutamyl-meso-2,6-diaminopimeloyl-D-alanyl-D-alanine + UMP. The protein operates within cell wall biogenesis; peptidoglycan biosynthesis. In terms of biological role, catalyzes the initial step of the lipid cycle reactions in the biosynthesis of the cell wall peptidoglycan: transfers peptidoglycan precursor phospho-MurNAc-pentapeptide from UDP-MurNAc-pentapeptide onto the lipid carrier undecaprenyl phosphate, yielding undecaprenyl-pyrophosphoryl-MurNAc-pentapeptide, known as lipid I. In Wolinella succinogenes (strain ATCC 29543 / DSM 1740 / CCUG 13145 / JCM 31913 / LMG 7466 / NCTC 11488 / FDC 602W) (Vibrio succinogenes), this protein is Phospho-N-acetylmuramoyl-pentapeptide-transferase.